The following is a 404-amino-acid chain: O-methyltransferase GME11366 (404 aa).

Residues 237–238, Asp-262, Arg-301, and Arg-302 each bind S-adenosyl-L-methionine; that span reads GG. Residue His-305 is the Proton acceptor of the active site.

It belongs to the class I-like SAM-binding methyltransferase superfamily. Cation-independent O-methyltransferase family.

Its pathway is secondary metabolite biosynthesis. In terms of biological role, O-methyltransferase; part of the gene cluster that mediates the biosynthesis of dibenzodioxocinones such as pestalotiollide B, a novel class of inhibitors against cholesterol ester transfer protein (CEPT). The biosynthesis initiates from condensation of acetate and malonate units catalyzed by the non-reducing PKS pks8/GME11356. Pks8/GME11356 lacks a thioesterase (TE) domain, which is important to the cyclizing of the third ring of atrochrysone carboxylic acid, and the esterase GME11355 might play the role of TE and catalyzes the cyclization reaction of the C ring. The lactamase-like protein GME11357 (or other beta-lactamases in Pestalotiopsis microspora) probably hydrolyzes the thioester bond between the ACP of pks8/GME11356 and the intermediate to release atrochrysone carboxylic acid, which is spontaneously dehydrates to form endocrocin anthrone. Endocrocin anthrone is further converted to emodin via the endocrocin intermediate. Emodin is then oxidized by several enzymes such as the Baeyer-Villiger oxidase GME11358, the oxidoreductase GME11367, the short chain dehydrogenase/reductase GME11373, as well as by other oxidoreductases from the cluster, to modify the A and C rings and open the B ring, and finally yield monodictyphenone. The prenyltransferase GME11375 may catalyze the addition reaction between the C5 side chains and the carbon bone of dibenzodioxocinones. The remaining biochemical reactions to the final product dibenzodioxocinones should be methylation catalyzed by methyltransferase GME11366 and reduction and lactonization reaction catalyzed by a series of oxidordeuctases. The sequence is that of O-methyltransferase GME11366 from Pestalotiopsis microspora.